An 868-amino-acid chain; its full sequence is Aconitate hydratase B (868 aa).

Substrate contacts are provided by residues Arg-192, 235-237 (SSR), 404-406 (QDT), and Ser-488. [4Fe-4S] cluster-binding residues include Cys-700, Cys-758, and Cys-761. The substrate site is built by Arg-780 and Arg-785.

Belongs to the aconitase/IPM isomerase family. As to quaternary structure, monomer. Requires [4Fe-4S] cluster as cofactor.

It catalyses the reaction citrate = D-threo-isocitrate. The enzyme catalyses (2S,3R)-3-hydroxybutane-1,2,3-tricarboxylate = 2-methyl-cis-aconitate + H2O. The protein operates within carbohydrate metabolism; tricarboxylic acid cycle; isocitrate from oxaloacetate: step 2/2. Its pathway is organic acid metabolism; propanoate degradation. Its function is as follows. Involved in the catabolism of short chain fatty acids (SCFA) via the tricarboxylic acid (TCA)(acetyl degradation route) and probably via the 2-methylcitrate cycle I (propionate degradation route). Catalyzes the reversible isomerization of citrate to isocitrate via cis-aconitate. Catalyzes the hydration of 2-methyl-cis-aconitate to yield (2R,3S)-2-methylisocitrate. The apo form of AcnB functions as a RNA-binding regulatory protein. The sequence is that of Aconitate hydratase B (acnB) from Synechocystis sp. (strain ATCC 27184 / PCC 6803 / Kazusa).